The following is a 347-amino-acid chain: Rhodopsin (347 aa).

At 1-33 (TEGPDFYIPMVNTTGVVRSPYEYPQYYLVNPAA) the chain is on the extracellular side. An N-linked (GlcNAc...) asparagine glycan is attached at Asn12. Residues 34–58 (FAVLGAYMFFLIIIGFPINFLTLYV) traverse the membrane as a helical segment. Topologically, residues 59–70 (TLEHKKLRTPLN) are cytoplasmic. The chain crosses the membrane as a helical span at residues 71–93 (YILLNLAVADLFMVIGGFTTTMY). Residues 94 to 107 (SSMHGYFVLGRLGC) lie on the Extracellular side of the membrane. Cys107 and Cys184 form a disulfide bridge. Residues 108–130 (NIEGFFATLGGMISLWSLAVLAI) form a helical membrane-spanning segment. Positions 131–133 (ERW) match the 'Ionic lock' involved in activated form stabilization motif. Residues 131–149 (ERWVVVCKPISNFRFGENH) lie on the Cytoplasmic side of the membrane. The helical transmembrane segment at 150–170 (AIMGVSLTWVMALACTVPPLV) threads the bilayer. The Extracellular portion of the chain corresponds to 171-199 (GWSRYIPEGMQCACGIDYYTRAEGYNNES). The N-linked (GlcNAc...) asparagine glycan is linked to Asn197. A helical transmembrane segment spans residues 200 to 221 (FVIYMFTFHFLFPMFIIFFCYG). Residues 222 to 249 (RLLCAVKEAAAAQQESETTQRAEREVTR) are Cytoplasmic-facing. A helical membrane pass occupies residues 250 to 271 (MVILMVIGYLVCWLPYASVAWF). Residues 272–283 (IFTHKGSEFGPL) are Extracellular-facing. A helical membrane pass occupies residues 284 to 305 (FMAVPSFFAKSSSIYNPIIYIC). Lys293 carries the N6-(retinylidene)lysine modification. The Cytoplasmic portion of the chain corresponds to 306–347 (MNKQFRQCMITTLFCGKNPFEGQEEDSSTKTEASSASSVSPA). Cys320 carries S-palmitoyl cysteine lipidation. The tract at residues 326–347 (EGQEEDSSTKTEASSASSVSPA) is disordered. Positions 335 to 347 (KTEASSASSVSPA) are enriched in low complexity.

Belongs to the G-protein coupled receptor 1 family. Opsin subfamily. Phosphorylated on some or all of the serine and threonine residues present in the C-terminal region. In terms of processing, contains one covalently linked retinal chromophore.

The protein localises to the membrane. The protein resides in the cell projection. It is found in the cilium. It localises to the photoreceptor outer segment. Photoreceptor required for image-forming vision at low light intensity. While most salt water fish species use retinal as chromophore, most freshwater fish use 3-dehydroretinal, or a mixture of retinal and 3-dehydroretinal. Light-induced isomerization of 11-cis to all-trans retinal triggers a conformational change that activates signaling via G-proteins. Subsequent receptor phosphorylation mediates displacement of the bound G-protein alpha subunit by arrestin and terminates signaling. This chain is Rhodopsin (rho), found in Sargocentron tiere (Blue lined squirrelfish).